Consider the following 79-residue polypeptide: Putative membrane protein insertion efficiency factor (79 aa).

The protein belongs to the UPF0161 family.

The protein resides in the cell inner membrane. In terms of biological role, could be involved in insertion of integral membrane proteins into the membrane. This chain is Putative membrane protein insertion efficiency factor, found in Prochlorococcus marinus (strain NATL1A).